A 254-amino-acid chain; its full sequence is Protein EFFECTOR OF TRANSCRIPTION 3 (254 aa).

A GIY-YIG domain is found at Arg103 to Gly152.

The protein localises to the cytoplasm. The protein is Protein EFFECTOR OF TRANSCRIPTION 3 of Arabidopsis thaliana (Mouse-ear cress).